The chain runs to 51 residues: Probable antitoxin PhoAT (51 aa).

The protein belongs to the PhoAT antitoxin family. In terms of assembly, interacts with toxin PhoH2.

Its function is as follows. Antitoxin component of a type II toxin-antitoxin (TA) system. The cognate antitoxin is PhoAT; the toxin gene cannot be expressed in the absence of the antitoxin gene in M.smegmatis (strain mc(2)4517), and abrogates the toxic effects of PhoH2 in M.smegmatis strain mc(2)155. This Mycobacterium tuberculosis (strain ATCC 25618 / H37Rv) protein is Probable antitoxin PhoAT.